Here is a 382-residue protein sequence, read N- to C-terminus: Alanine racemase 1 (382 aa).

Residue K39 is the Proton acceptor; specific for D-alanine of the active site. At K39 the chain carries N6-(pyridoxal phosphate)lysine. R138 is a substrate binding site. The active-site Proton acceptor; specific for L-alanine is Y265. M312 is a substrate binding site.

It belongs to the alanine racemase family. The cofactor is pyridoxal 5'-phosphate.

It catalyses the reaction L-alanine = D-alanine. It functions in the pathway amino-acid biosynthesis; D-alanine biosynthesis; D-alanine from L-alanine: step 1/1. Its function is as follows. Catalyzes the interconversion of L-alanine and D-alanine. May also act on other amino acids. This Staphylococcus aureus (strain NCTC 8325 / PS 47) protein is Alanine racemase 1 (alr1).